Here is a 324-residue protein sequence, read N- to C-terminus: Viral cathepsin (324 aa).

Positions 1-16 (MNKIVLYLLVYGATLG) are cleaved as a signal peptide. Positions 17-113 (AAYDLLKAPS…VVLDRPPDKG (97 aa)) are cleaved as a propeptide — activation peptide. 3 disulfides stabilise this stretch: cysteine 134–cysteine 175, cysteine 168–cysteine 208, and cysteine 263–cysteine 311. Cysteine 137 is an active-site residue. Asparagine 159 carries an N-linked (GlcNAc...) asparagine; by host glycan. Catalysis depends on residues histidine 270 and asparagine 290.

It belongs to the peptidase C1 family. Synthesized as an inactive proenzyme and activated by proteolytic removal of the inhibitory propeptide.

The catalysed reaction is Endopeptidase of broad specificity, hydrolyzing substrates of both cathepsin L and cathepsin B.. Its function is as follows. Cysteine protease that plays an essential role in host liquefaction to facilitate horizontal transmission of the virus. May participate in the degradation of foreign protein expressed by the baculovirus system. The sequence is that of Viral cathepsin (VCATH) from Antheraea pernyi nuclear polyhedrosis virus (ApNPV).